Consider the following 691-residue polypeptide: Pentatricopeptide repeat-containing protein ATP4, chloroplastic (691 aa).

A compositionally biased stretch (low complexity) spans 1–17 (MASLPLCRSPSSLLPSW). Residues 1-35 (MASLPLCRSPSSLLPSWPHRPISASFNPKNPSSPV) constitute a chloroplast transit peptide. Positions 1–76 (MASLPLCRSP…SSNTRFLWVN (76 aa)) are disordered. The span at 24–33 (ASFNPKNPSS) shows a compositional bias: polar residues. Over residues 45–56 (PPQPQDPSPPSD) the composition is skewed to pro residues. Over residues 61–76 (GTRPSSSSNTRFLWVN) the composition is skewed to polar residues. PPR repeat units follow at residues 163-197 (KVIL…GVQP), 198-232 (DNAT…GCSP), 233-267 (DMLT…KWQL), 268-302 (DPVI…GVRP), 303-337 (NLVV…QVQP), 338-372 (SRAT…AMGI), 373-403 (DVML…MKAS), 411-445 (DSWS…GFKP), 446-480 (NIFV…GIIP), and 546-580 (KMPY…GIYA). Residues 592–677 (LHLRGLSVGA…WFLTTNVAAK (86 aa)) enclose the Smr domain.

Belongs to the PPR family. P subfamily.

It is found in the plastid. The protein localises to the chloroplast stroma. In terms of biological role, involved in translation and accumulation of chloroplast ATP synthase subunits. Interacts with the 5'-UTR of the chloroplast bicistronic atpB and atpE mRNA and activates its translation by facilitating ribosome association with the mRNA. Required for accumulation and activity of the chloroplast ATP synthase. Enhances atpA translation and is required for accumulation of specific processed atpF and psaJ transcripts. Required for the stabilization of bicistronic rpl16 and rpl14 mRNAs. The polypeptide is Pentatricopeptide repeat-containing protein ATP4, chloroplastic (Zea mays (Maize)).